The primary structure comprises 339 residues: Anthranilate phosphoribosyltransferase (339 aa).

Residues G81, 84–85 (GD), S89, 91–94 (NVSS), 109–117 (KHGNRALSS), and A121 each bind 5-phospho-alpha-D-ribose 1-diphosphate. G81 is a binding site for anthranilate. S93 is a Mg(2+) binding site. N112 serves as a coordination point for anthranilate. Residue R167 participates in anthranilate binding. Residues D225 and E226 each coordinate Mg(2+).

Belongs to the anthranilate phosphoribosyltransferase family. Homodimer. Mg(2+) is required as a cofactor.

The catalysed reaction is N-(5-phospho-beta-D-ribosyl)anthranilate + diphosphate = 5-phospho-alpha-D-ribose 1-diphosphate + anthranilate. The protein operates within amino-acid biosynthesis; L-tryptophan biosynthesis; L-tryptophan from chorismate: step 2/5. Functionally, catalyzes the transfer of the phosphoribosyl group of 5-phosphorylribose-1-pyrophosphate (PRPP) to anthranilate to yield N-(5'-phosphoribosyl)-anthranilate (PRA). The polypeptide is Anthranilate phosphoribosyltransferase (Brucella suis (strain ATCC 23445 / NCTC 10510)).